A 121-amino-acid polypeptide reads, in one-letter code: Small ribosomal subunit protein uS13 (121 aa).

The interval 94–121 (RGLPVRGQSTKNNARTRKGPKRTVGAKR) is disordered. The segment covering 107–121 (ARTRKGPKRTVGAKR) has biased composition (basic residues).

The protein belongs to the universal ribosomal protein uS13 family. Part of the 30S ribosomal subunit. Forms a loose heterodimer with protein S19. Forms two bridges to the 50S subunit in the 70S ribosome.

Its function is as follows. Located at the top of the head of the 30S subunit, it contacts several helices of the 16S rRNA. In the 70S ribosome it contacts the 23S rRNA (bridge B1a) and protein L5 of the 50S subunit (bridge B1b), connecting the 2 subunits; these bridges are implicated in subunit movement. Contacts the tRNAs in the A and P-sites. This is Small ribosomal subunit protein uS13 from Natranaerobius thermophilus (strain ATCC BAA-1301 / DSM 18059 / JW/NM-WN-LF).